Consider the following 280-residue polypeptide: Inner kinetochore subunit fta1 (280 aa).

This sequence belongs to the CENP-L/IML3 family. Component of the inner kinetochore constitutive centromere-associated network (CCAN) (also known as central kinetochore Sim4 complex in fission yeast), which is composed of at least cnl2, cnp3, cnp20, fta1, fta2, fta3, fta4, fta6, fta7, mal2, mhf1, mhf2, mis6, mis15, mis17, sim4 and wip1.

It is found in the nucleus. Its subcellular location is the chromosome. It localises to the centromere. The protein resides in the kinetochore. Its function is as follows. Component of the kinetochore, a multiprotein complex that assembles on centromeric DNA and attaches chromosomes to spindle microtubules, mediating chromosome segregation and sister chromatid segregation during meiosis and mitosis. Component of the inner kinetochore constitutive centromere-associated network (CCAN), which serves as a structural platform for outer kinetochore assembly. The protein is Inner kinetochore subunit fta1 (fta1) of Schizosaccharomyces pombe (strain 972 / ATCC 24843) (Fission yeast).